We begin with the raw amino-acid sequence, 204 residues long: Probable dTDP-4-oxo-2,6-dideoxy-D-glucose 3,5-epimerase (204 aa).

Residues Arg21, Glu26, 45 to 47, Lys70, and His117 each bind substrate; that span reads QAN. Tyr130 (proton donor) is an active-site residue. Glu141 contacts substrate. Positions 164–204 are disordered; that stretch reads VGEGTPTHRPWRRPRRPGILPDYEGVPGALHRGGGRRGTGP.

It belongs to the dTDP-4-dehydrorhamnose 3,5-epimerase family.

The protein operates within antibiotic biosynthesis. Functionally, involved in the biosynthesis of one of the two 2,6-deoxysugars, dTDP-L-oleandrose, attached to the macrolactone ring oleandolide to produce the aglycone antibiotic oleandomycin. Probably catalyzes the conversion of dTDP-4-keto-2,6-dideoxy-alpha-D-glucose to dTDP-4-keto-2,6-dideoxy-beta-L-galactose. This Streptomyces antibioticus protein is Probable dTDP-4-oxo-2,6-dideoxy-D-glucose 3,5-epimerase.